Reading from the N-terminus, the 147-residue chain is Transcriptional regulator MraZ (147 aa).

SpoVT-AbrB domains are found at residues 5 to 52 (SHAI…PETE) and 81 to 124 (ATTL…SEEA).

Belongs to the MraZ family. Forms oligomers.

The protein resides in the cytoplasm. The protein localises to the nucleoid. This chain is Transcriptional regulator MraZ, found in Saccharophagus degradans (strain 2-40 / ATCC 43961 / DSM 17024).